The sequence spans 64 residues: Small, acid-soluble spore protein H (64 aa).

It belongs to the SspH family.

Its subcellular location is the spore core. The protein is Small, acid-soluble spore protein H of Acetivibrio thermocellus (strain ATCC 27405 / DSM 1237 / JCM 9322 / NBRC 103400 / NCIMB 10682 / NRRL B-4536 / VPI 7372) (Clostridium thermocellum).